The sequence spans 206 residues: 2,3-bisphosphoglycerate-dependent phosphoglycerate mutase (206 aa).

Substrate is bound by residues 9-16 (RHGQSEWN), 22-23 (TG), Arg-61, 88-91 (ERNY), Lys-99, 115-116 (RR), and 159-160 (GN). His-10 functions as the Tele-phosphohistidine intermediate in the catalytic mechanism. Catalysis depends on Glu-88, which acts as the Proton donor/acceptor.

Belongs to the phosphoglycerate mutase family. BPG-dependent PGAM subfamily. Homodimer.

The catalysed reaction is (2R)-2-phosphoglycerate = (2R)-3-phosphoglycerate. The protein operates within carbohydrate degradation; glycolysis; pyruvate from D-glyceraldehyde 3-phosphate: step 3/5. Catalyzes the interconversion of 2-phosphoglycerate and 3-phosphoglycerate. The sequence is that of 2,3-bisphosphoglycerate-dependent phosphoglycerate mutase from Bartonella tribocorum (strain CIP 105476 / IBS 506).